A 105-amino-acid polypeptide reads, in one-letter code: Thioredoxin (105 aa).

In terms of domain architecture, Thioredoxin spans 1–105 (MFELDKDTFE…NVEAMVKKYI (105 aa)). Cys29 and Cys32 form a disulfide bridge.

The protein belongs to the thioredoxin family.

Its function is as follows. Participates in various redox reactions through the reversible oxidation of its active center dithiol to a disulfide and catalyzes dithiol-disulfide exchange reactions. The polypeptide is Thioredoxin (trxA) (Acetoanaerobium sticklandii (strain ATCC 12662 / DSM 519 / JCM 1433 / CCUG 9281 / NCIMB 10654 / HF) (Clostridium sticklandii)).